We begin with the raw amino-acid sequence, 100 residues long: Large ribosomal subunit protein uL23 (100 aa).

This sequence belongs to the universal ribosomal protein uL23 family. In terms of assembly, part of the 50S ribosomal subunit. Contacts protein L29, and trigger factor when it is bound to the ribosome.

Functionally, one of the early assembly proteins it binds 23S rRNA. One of the proteins that surrounds the polypeptide exit tunnel on the outside of the ribosome. Forms the main docking site for trigger factor binding to the ribosome. This is Large ribosomal subunit protein uL23 from Mycolicibacterium paratuberculosis (strain ATCC BAA-968 / K-10) (Mycobacterium paratuberculosis).